The sequence spans 347 residues: Lipoyl synthase (347 aa).

7 residues coordinate [4Fe-4S] cluster: cysteine 77, cysteine 82, cysteine 88, cysteine 103, cysteine 107, cysteine 110, and serine 317. In terms of domain architecture, Radical SAM core spans 89–306 (FADGTATFMI…MDYGKKIGFF (218 aa)).

The protein belongs to the radical SAM superfamily. Lipoyl synthase family. [4Fe-4S] cluster serves as cofactor.

The protein localises to the cytoplasm. It carries out the reaction [[Fe-S] cluster scaffold protein carrying a second [4Fe-4S](2+) cluster] + N(6)-octanoyl-L-lysyl-[protein] + 2 oxidized [2Fe-2S]-[ferredoxin] + 2 S-adenosyl-L-methionine + 4 H(+) = [[Fe-S] cluster scaffold protein] + N(6)-[(R)-dihydrolipoyl]-L-lysyl-[protein] + 4 Fe(3+) + 2 hydrogen sulfide + 2 5'-deoxyadenosine + 2 L-methionine + 2 reduced [2Fe-2S]-[ferredoxin]. It functions in the pathway protein modification; protein lipoylation via endogenous pathway; protein N(6)-(lipoyl)lysine from octanoyl-[acyl-carrier-protein]: step 2/2. Its function is as follows. Catalyzes the radical-mediated insertion of two sulfur atoms into the C-6 and C-8 positions of the octanoyl moiety bound to the lipoyl domains of lipoate-dependent enzymes, thereby converting the octanoylated domains into lipoylated derivatives. The polypeptide is Lipoyl synthase (Psychrobacter arcticus (strain DSM 17307 / VKM B-2377 / 273-4)).